Here is a 160-residue protein sequence, read N- to C-terminus: Baculoviral IAP repeat-containing protein 5.1-A (160 aa).

The BIR repeat unit spans residues 27-97 (RLATFADWPF…KRSANCGFLS (71 aa)). Thr-43 carries the phosphothreonine; by CDK1 modification. Zn(2+) contacts are provided by Cys-66, Cys-69, His-86, and Cys-93.

This sequence belongs to the IAP family. Component of the CPC at least composed of survivin/birc5, incenp, cdca8/borealin and/or cdca9/dasra-A, and aurkb/aurora-B. Interacts directly with incenp (via N-terminus), and may weakly interact with aurkb (via N-terminus) to stabilize the complex. Interacts with GTP-bound ran in both the S and M phases of the cell cycle. Also found in a complex with ubiquitin-mediated signaling proteins including at least usp9x/xFAM, nploc4/npl4 and ufd1. Ubiquitination is required for centrosome-targeting.

The protein localises to the cytoplasm. Its subcellular location is the nucleus. It localises to the chromosome. The protein resides in the centromere. It is found in the cytoskeleton. The protein localises to the spindle. Component of the chromosomal passenger complex (CPC), a complex that acts as a key regulator of mitosis. The CPC complex has essential functions at the centromere in ensuring correct chromosome alignment and segregation and is required for chromatin-induced microtubule stabilization and spindle assembly. Stimulates the mitotic kinase activity of aurkb/aurora-B in the CPC. Does not appear to exhibit anti-apoptotic activity. The protein is Baculoviral IAP repeat-containing protein 5.1-A (birc5.1-a) of Xenopus laevis (African clawed frog).